The following is a 140-amino-acid chain: Putative nickel-responsive regulator (140 aa).

Ni(2+)-binding residues include His81, His92, His94, and Cys100.

This sequence belongs to the transcriptional regulatory CopG/NikR family. Ni(2+) serves as cofactor.

In terms of biological role, transcriptional regulator. The protein is Putative nickel-responsive regulator of Methanocella arvoryzae (strain DSM 22066 / NBRC 105507 / MRE50).